The following is a 220-amino-acid chain: Deoxyribose-phosphate aldolase (220 aa).

D89 functions as the Proton donor/acceptor in the catalytic mechanism. K151 (schiff-base intermediate with acetaldehyde) is an active-site residue. Residue K180 is the Proton donor/acceptor of the active site.

The protein belongs to the DeoC/FbaB aldolase family. DeoC type 1 subfamily.

The protein localises to the cytoplasm. It catalyses the reaction 2-deoxy-D-ribose 5-phosphate = D-glyceraldehyde 3-phosphate + acetaldehyde. The protein operates within carbohydrate degradation; 2-deoxy-D-ribose 1-phosphate degradation; D-glyceraldehyde 3-phosphate and acetaldehyde from 2-deoxy-alpha-D-ribose 1-phosphate: step 2/2. In terms of biological role, catalyzes a reversible aldol reaction between acetaldehyde and D-glyceraldehyde 3-phosphate to generate 2-deoxy-D-ribose 5-phosphate. This chain is Deoxyribose-phosphate aldolase, found in Streptococcus pneumoniae serotype 2 (strain D39 / NCTC 7466).